Consider the following 1038-residue polypeptide: Kinesin-like protein KIF17 (1038 aa).

One can recognise a Kinesin motor domain in the interval 5–335; the sequence is SVKVVVRCRP…LRYANRAKNI (331 aa). An ATP-binding site is contributed by 91 to 98; it reads GQTGSGKS. Residues 346 to 470 adopt a coiled-coil conformation; that stretch reads KDALLREYQE…ETEAILKAEV (125 aa). Disordered stretches follow at residues 379-401, 503-559, and 636-657; these read TQTP…VQQD, LSMP…GPEE, and DSSQ…LLEP. Polar residues-rich tracts occupy residues 533–551 and 636–651; these read SEFS…SATS and DSSQ…QPSS. A coiled-coil region spans residues 748–855; sequence QQVLARLQLL…QLEKIDYLAT (108 aa). Disordered stretches follow at residues 916 to 940 and 976 to 1038; these read VVPT…PHMQ and MKSL…GEPL. Positions 983–1000 are enriched in low complexity; the sequence is NSPPGLNSSLSNNSALPP.

It belongs to the TRAFAC class myosin-kinesin ATPase superfamily. Kinesin family. In terms of assembly, homodimer. Interacts with APBA1 (via PDZ domain); the interaction is direct and is required for association of KIF17 with the cargo that is to be transported. Interacts with IFT B complex components IFT52 and IFT57. Interacts with IFT70B. Interacts with PIWIL1. Interacts with TBATA. As to expression, highly expressed in the gray matter of the brain, especially in the hippocampus.

It is found in the cytoplasm. The protein resides in the cytoskeleton. The protein localises to the cell projection. It localises to the cilium. Its subcellular location is the dendrite. In terms of biological role, dendrite-specific motor protein which, in association with the Apba1-containing complex (LIN-10-LIN-2-LIN-7 complex), transports vesicles containing N-methyl-D-aspartate (NMDA) receptor subunit NR2B along microtubules. In Mus musculus (Mouse), this protein is Kinesin-like protein KIF17 (Kif17).